Reading from the N-terminus, the 1977-residue chain is Protein rotatin homolog (1977 aa).

The interval 141 to 166 is disordered; the sequence is SVSSLSSNDIPSQATESADSSSNQIY.

Belongs to the rotatin family. Interacts with Rcd4;this complex is recruited to daughter centrioles before their conversion to centrosomes.

It localises to the cytoplasm. It is found in the cytoskeleton. The protein localises to the microtubule organizing center. The protein resides in the centrosome. Its subcellular location is the centriole. In terms of biological role, participes in the structural integrity of both centrioles and basal bodies and in centriole cohesion. Participates in the later stages of centriole assembly through the interaction with Rcd4 leading to the centriole to centrosome conversion. In Drosophila melanogaster (Fruit fly), this protein is Protein rotatin homolog.